We begin with the raw amino-acid sequence, 309 residues long: Taste receptor type 2 member 8 (309 aa).

Residues Met-1–Asn-7 are Extracellular-facing. Residues Ile-8 to Gly-28 form a helical membrane-spanning segment. The Cytoplasmic portion of the chain corresponds to Leu-29–Asn-50. Residues Leu-51–Leu-71 form a helical membrane-spanning segment. Residues Tyr-72–Gln-82 lie on the Extracellular side of the membrane. Residues Ile-83–Leu-103 traverse the membrane as a helical segment. At Asn-104–Arg-131 the chain is on the cytoplasmic side. The helical transmembrane segment at Trp-132–Leu-152 threads the bilayer. The Extracellular portion of the chain corresponds to Ser-153 to Thr-184. Asn-167 carries N-linked (GlcNAc...) asparagine glycosylation. The helical transmembrane segment at Leu-185 to Val-205 threads the bilayer. The Cytoplasmic portion of the chain corresponds to Arg-206 to Leu-239. The chain crosses the membrane as a helical span at residues Leu-240–Ile-260. The Extracellular portion of the chain corresponds to Thr-261–Ala-266. The chain crosses the membrane as a helical span at residues Met-267 to Ile-287. The Cytoplasmic segment spans residues Leu-288–Thr-309.

The protein belongs to the G-protein coupled receptor T2R family.

The protein resides in the membrane. In terms of biological role, receptor that may play a role in the perception of bitterness and is gustducin-linked. May play a role in sensing the chemical composition of the gastrointestinal content. The activity of this receptor may stimulate alpha gustducin, mediate PLC-beta-2 activation and lead to the gating of TRPM5. In Papio hamadryas (Hamadryas baboon), this protein is Taste receptor type 2 member 8 (TAS2R8).